The chain runs to 530 residues: Light-independent protochlorophyllide reductase subunit B (530 aa).

Residue Asp-36 coordinates [4Fe-4S] cluster. Asp-290 (proton donor) is an active-site residue. Gly-425 to Leu-426 is a binding site for substrate.

Belongs to the ChlB/BchB/BchZ family. In terms of assembly, protochlorophyllide reductase is composed of three subunits; ChlL, ChlN and ChlB. Forms a heterotetramer of two ChlB and two ChlN subunits. [4Fe-4S] cluster is required as a cofactor.

The catalysed reaction is chlorophyllide a + oxidized 2[4Fe-4S]-[ferredoxin] + 2 ADP + 2 phosphate = protochlorophyllide a + reduced 2[4Fe-4S]-[ferredoxin] + 2 ATP + 2 H2O. The protein operates within porphyrin-containing compound metabolism; chlorophyll biosynthesis (light-independent). In terms of biological role, component of the dark-operative protochlorophyllide reductase (DPOR) that uses Mg-ATP and reduced ferredoxin to reduce ring D of protochlorophyllide (Pchlide) to form chlorophyllide a (Chlide). This reaction is light-independent. The NB-protein (ChlN-ChlB) is the catalytic component of the complex. This is Light-independent protochlorophyllide reductase subunit B from Synechococcus sp. (strain WH7803).